A 341-amino-acid chain; its full sequence is Ketol-acid reductoisomerase (NADP(+)) (341 aa).

The KARI N-terminal Rossmann domain maps to 2–181 (AKVYYNGDAN…GAARAGVLET (180 aa)). NADP(+) is bound by residues 25-28 (YGSQ), Arg-48, Ser-52, and 82-85 (DEKQ). The active site involves His-107. NADP(+) is bound at residue Gly-133. The region spanning 182–327 (TFKEETETDL…RELRSMMPFV (146 aa)) is the KARI C-terminal knotted domain. Asp-190, Glu-194, Glu-226, and Glu-230 together coordinate Mg(2+). A substrate-binding site is contributed by Ser-251.

The protein belongs to the ketol-acid reductoisomerase family. Requires Mg(2+) as cofactor.

The enzyme catalyses (2R)-2,3-dihydroxy-3-methylbutanoate + NADP(+) = (2S)-2-acetolactate + NADPH + H(+). The catalysed reaction is (2R,3R)-2,3-dihydroxy-3-methylpentanoate + NADP(+) = (S)-2-ethyl-2-hydroxy-3-oxobutanoate + NADPH + H(+). The protein operates within amino-acid biosynthesis; L-isoleucine biosynthesis; L-isoleucine from 2-oxobutanoate: step 2/4. It functions in the pathway amino-acid biosynthesis; L-valine biosynthesis; L-valine from pyruvate: step 2/4. In terms of biological role, involved in the biosynthesis of branched-chain amino acids (BCAA). Catalyzes an alkyl-migration followed by a ketol-acid reduction of (S)-2-acetolactate (S2AL) to yield (R)-2,3-dihydroxy-isovalerate. In the isomerase reaction, S2AL is rearranged via a Mg-dependent methyl migration to produce 3-hydroxy-3-methyl-2-ketobutyrate (HMKB). In the reductase reaction, this 2-ketoacid undergoes a metal-dependent reduction by NADPH to yield (R)-2,3-dihydroxy-isovalerate. This is Ketol-acid reductoisomerase (NADP(+)) from Geobacillus thermodenitrificans (strain NG80-2).